A 437-amino-acid chain; its full sequence is Sorting nexin-30 (437 aa).

Residues 1–45 form a disordered region; it reads MAGGPPKALPSTGPQSLRDMPHPLAGSSSEEAVGGDSTPSPDLLM. Thr38 is modified (phosphothreonine). The residue at position 40 (Ser40) is a Phosphoserine. The PX domain maps to 89-210; it reads RDLFVTVDDP…VFLTAKDLNA (122 aa). Residues Arg132, Gln134, Lys162, and Arg176 each contribute to the a 1,2-diacyl-sn-glycero-3-phospho-(1D-myo-inositol-3-phosphate) site. One can recognise a BAR domain in the interval 234–437; it reads KLRSRPLEFA…PLLQEKQETK (204 aa).

Belongs to the sorting nexin family. In terms of assembly, heterodimer; heterodimerizes with SNX4.

It localises to the early endosome membrane. Involved in the regulation of endocytosis and in several stages of intracellular trafficking. Together with SNX4, involved in autophagosome assembly. The protein is Sorting nexin-30 of Mus musculus (Mouse).